Reading from the N-terminus, the 542-residue chain is Chaperonin GroEL 2 (542 aa).

ATP-binding positions include 30 to 33 (TLGP), K51, 87 to 91 (DGTTT), G415, and D496. The segment at 523–542 (AEKPKKDGQPQMPPAPGMDF) is disordered. Residues 533-542 (QMPPAPGMDF) show a composition bias toward pro residues.

It belongs to the chaperonin (HSP60) family. In terms of assembly, forms a cylinder of 14 subunits composed of two heptameric rings stacked back-to-back. Interacts with the co-chaperonin GroES.

It is found in the cytoplasm. The enzyme catalyses ATP + H2O + a folded polypeptide = ADP + phosphate + an unfolded polypeptide.. Together with its co-chaperonin GroES, plays an essential role in assisting protein folding. The GroEL-GroES system forms a nano-cage that allows encapsulation of the non-native substrate proteins and provides a physical environment optimized to promote and accelerate protein folding. The polypeptide is Chaperonin GroEL 2 (Sinorhizobium medicae (strain WSM419) (Ensifer medicae)).